The sequence spans 257 residues: Zinc transporter ZupT (257 aa).

Transmembrane regions (helical) follow at residues 5–25 (LILT…GVLG), 32–52 (VLAF…LMEM), and 61–81 (GMSP…YFGL). The Fe(2+) site is built by asparagine 120 and glutamate 123. Residues glutamate 123 and histidine 148 each contribute to the Zn(2+) site. Residues asparagine 149, glutamate 152, and glutamate 181 each coordinate Fe(2+). Glutamate 152 is a Zn(2+) binding site. Transmembrane regions (helical) follow at residues 182–202 (IFGG…IVMA), 203–223 (AIMA…LMPL), and 236–256 (GVLC…TIGI).

Belongs to the ZIP transporter (TC 2.A.5) family. ZupT subfamily.

The protein localises to the cell inner membrane. It carries out the reaction Zn(2+)(in) = Zn(2+)(out). Functionally, mediates zinc uptake. May also transport other divalent cations. This Salmonella arizonae (strain ATCC BAA-731 / CDC346-86 / RSK2980) protein is Zinc transporter ZupT.